We begin with the raw amino-acid sequence, 145 residues long: ATP synthase epsilon chain (145 aa).

This sequence belongs to the ATPase epsilon chain family. As to quaternary structure, F-type ATPases have 2 components, CF(1) - the catalytic core - and CF(0) - the membrane proton channel. CF(1) has five subunits: alpha(3), beta(3), gamma(1), delta(1), epsilon(1). CF(0) has three main subunits: a, b and c.

The protein localises to the cell inner membrane. Produces ATP from ADP in the presence of a proton gradient across the membrane. The protein is ATP synthase epsilon chain of Francisella tularensis subsp. mediasiatica (strain FSC147).